We begin with the raw amino-acid sequence, 593 residues long: Dihydroxy-acid dehydratase (593 aa).

Positions 1-17 (MSQQTEPDDDAALDGDE) are enriched in acidic residues. Residues 1-40 (MSQQTEPDDDAALDGDEPGAYGKDERLRSREVTEGPERAP) form a disordered region. Residues 22 to 40 (GKDERLRSREVTEGPERAP) show a composition bias toward basic and acidic residues. C72 serves as a coordination point for [2Fe-2S] cluster. D104 is a binding site for Mg(2+). [2Fe-2S] cluster is bound at residue C145. Positions 146 and 147 each coordinate Mg(2+). The residue at position 147 (K147) is an N6-carboxylysine. C217 serves as a coordination point for [2Fe-2S] cluster. E475 is a binding site for Mg(2+). Residue S501 is the Proton acceptor of the active site.

It belongs to the IlvD/Edd family. As to quaternary structure, homodimer. It depends on [2Fe-2S] cluster as a cofactor. Mg(2+) serves as cofactor.

The catalysed reaction is (2R)-2,3-dihydroxy-3-methylbutanoate = 3-methyl-2-oxobutanoate + H2O. It catalyses the reaction (2R,3R)-2,3-dihydroxy-3-methylpentanoate = (S)-3-methyl-2-oxopentanoate + H2O. Its pathway is amino-acid biosynthesis; L-isoleucine biosynthesis; L-isoleucine from 2-oxobutanoate: step 3/4. It participates in amino-acid biosynthesis; L-valine biosynthesis; L-valine from pyruvate: step 3/4. Functionally, functions in the biosynthesis of branched-chain amino acids. Catalyzes the dehydration of (2R,3R)-2,3-dihydroxy-3-methylpentanoate (2,3-dihydroxy-3-methylvalerate) into 2-oxo-3-methylpentanoate (2-oxo-3-methylvalerate) and of (2R)-2,3-dihydroxy-3-methylbutanoate (2,3-dihydroxyisovalerate) into 2-oxo-3-methylbutanoate (2-oxoisovalerate), the penultimate precursor to L-isoleucine and L-valine, respectively. The sequence is that of Dihydroxy-acid dehydratase from Natronomonas pharaonis (strain ATCC 35678 / DSM 2160 / CIP 103997 / JCM 8858 / NBRC 14720 / NCIMB 2260 / Gabara) (Halobacterium pharaonis).